The chain runs to 432 residues: Enolase (432 aa).

Q166 provides a ligand contact to (2R)-2-phosphoglycerate. The Proton donor role is filled by E208. Residues D245, E291, and D318 each contribute to the Mg(2+) site. K343, R372, S373, and K394 together coordinate (2R)-2-phosphoglycerate. K343 (proton acceptor) is an active-site residue.

Belongs to the enolase family. Mg(2+) serves as cofactor.

It is found in the cytoplasm. Its subcellular location is the secreted. The protein localises to the cell surface. It carries out the reaction (2R)-2-phosphoglycerate = phosphoenolpyruvate + H2O. Its pathway is carbohydrate degradation; glycolysis; pyruvate from D-glyceraldehyde 3-phosphate: step 4/5. In terms of biological role, catalyzes the reversible conversion of 2-phosphoglycerate (2-PG) into phosphoenolpyruvate (PEP). It is essential for the degradation of carbohydrates via glycolysis. In Leptospira borgpetersenii serovar Hardjo-bovis (strain L550), this protein is Enolase.